Reading from the N-terminus, the 251-residue chain is UPF0309 protein SCO4393 (251 aa).

The SIS domain maps to leucine 36–glutamate 220.

It belongs to the UPF0309 family.

The chain is UPF0309 protein SCO4393 from Streptomyces coelicolor (strain ATCC BAA-471 / A3(2) / M145).